Consider the following 215-residue polypeptide: Protein-L-isoaspartate O-methyltransferase (215 aa).

Residue serine 62 is part of the active site.

Belongs to the methyltransferase superfamily. L-isoaspartyl/D-aspartyl protein methyltransferase family.

It localises to the cytoplasm. It carries out the reaction [protein]-L-isoaspartate + S-adenosyl-L-methionine = [protein]-L-isoaspartate alpha-methyl ester + S-adenosyl-L-homocysteine. Functionally, catalyzes the methyl esterification of L-isoaspartyl residues in peptides and proteins that result from spontaneous decomposition of normal L-aspartyl and L-asparaginyl residues. It plays a role in the repair and/or degradation of damaged proteins. This is Protein-L-isoaspartate O-methyltransferase from Bradyrhizobium sp. (strain BTAi1 / ATCC BAA-1182).